The chain runs to 50 residues: Inducible serine protease inhibitor 1 (50 aa).

Residues 1–27 (DLVXGTNFXKNNPXSTRVAANSXRSPS) form a disordered region. The segment covering 8–25 (FXKNNPXSTRVAANSXRS) has biased composition (polar residues).

Inhibits trypsin and the toxin protease PR2 of M.anisopliae. Does not inhibit chymotrypsin, subtilisin Carlsberg, proteinase K, porcine pancreatic elastase and the toxin protease PR1 of M.anisopliae. The chain is Inducible serine protease inhibitor 1 from Galleria mellonella (Greater wax moth).